A 576-amino-acid chain; its full sequence is Sulfite reductase [NADPH] hemoprotein beta-component (576 aa).

The span at 1–12 shows a compositional bias: basic and acidic residues; the sequence is MDAKTQPDRSRD. The disordered stretch occupies residues 1 to 26; that stretch reads MDAKTQPDRSRDVSQPLDKLGPDETL. Cys441, Cys447, Cys486, and Cys490 together coordinate [4Fe-4S] cluster. Cys490 provides a ligand contact to siroheme.

Belongs to the nitrite and sulfite reductase 4Fe-4S domain family. Alpha(8)-beta(8). The alpha component is a flavoprotein, the beta component is a hemoprotein. It depends on siroheme as a cofactor. The cofactor is [4Fe-4S] cluster.

It catalyses the reaction hydrogen sulfide + 3 NADP(+) + 3 H2O = sulfite + 3 NADPH + 4 H(+). The protein operates within sulfur metabolism; hydrogen sulfide biosynthesis; hydrogen sulfide from sulfite (NADPH route): step 1/1. In terms of biological role, component of the sulfite reductase complex that catalyzes the 6-electron reduction of sulfite to sulfide. This is one of several activities required for the biosynthesis of L-cysteine from sulfate. This Nitrobacter winogradskyi (strain ATCC 25391 / DSM 10237 / CIP 104748 / NCIMB 11846 / Nb-255) protein is Sulfite reductase [NADPH] hemoprotein beta-component.